Consider the following 240-residue polypeptide: MGKTQSLPILITGGGRRIGLALAWHFINQKQPVIVSYRTHYPAIDGLIKAGAQCIQADFSTNDGVMAFADEVLKSTHGLRAILHNASAWMAEKPGAPLTDVLACMMQIHVNTPYLLNHALERLLRGHGHAASDIIHFTDYVVERGSDKHIAYAASKAALDNMTRSFARKLAPEVKVNSIAPSLILFNEHDDAEYRQQALNKSLMKTAPGEKEVIDLVDYLLTSCFVTGRSFPLDGGRHLR.

The Proton acceptor role is filled by Tyr-152.

The protein belongs to the short-chain dehydrogenases/reductases (SDR) family. FolM subfamily.

It catalyses the reaction (6S)-5,6,7,8-tetrahydrofolate + NADP(+) = 7,8-dihydrofolate + NADPH + H(+). The enzyme catalyses 7,8-dihydromonapterin + NADPH + H(+) = 5,6,7,8-tetrahydromonapterin + NADP(+). Its function is as follows. Catalyzes the reduction of dihydromonapterin to tetrahydromonapterin. Also has lower activity with dihydrofolate. The polypeptide is Dihydromonapterin reductase (folM) (Escherichia coli O1:K1 / APEC).